The following is a 157-amino-acid chain: UPF0225 protein Psyr_3863 (157 aa).

It belongs to the UPF0225 family.

In Pseudomonas syringae pv. syringae (strain B728a), this protein is UPF0225 protein Psyr_3863.